We begin with the raw amino-acid sequence, 392 residues long: Putative glutamate--cysteine ligase 2 (392 aa).

The tract at residues 1 to 21 (MMPVSGWRAVSSAPASSSAGR) is disordered. The span at 9 to 19 (AVSSAPASSSA) shows a compositional bias: low complexity.

It belongs to the glutamate--cysteine ligase type 2 family. YbdK subfamily.

It catalyses the reaction L-cysteine + L-glutamate + ATP = gamma-L-glutamyl-L-cysteine + ADP + phosphate + H(+). Its function is as follows. ATP-dependent carboxylate-amine ligase which exhibits weak glutamate--cysteine ligase activity. The sequence is that of Putative glutamate--cysteine ligase 2 from Mycobacterium ulcerans (strain Agy99).